A 620-amino-acid polypeptide reads, in one-letter code: Translation initiation factor IF-2 (620 aa).

In terms of domain architecture, tr-type G spans 119 to 288 (ERPPIVTIMG…IILISELENL (170 aa)). The interval 128-135 (GHVDHGKT) is G1. 128–135 (GHVDHGKT) provides a ligand contact to GTP. A G2 region spans residues 153 to 157 (GITQA). The G3 stretch occupies residues 175-178 (DTPG). Residues 175–179 (DTPGH) and 229–232 (NKID) each bind GTP. Residues 229-232 (NKID) are G4. The segment at 265–267 (SAI) is G5.

It belongs to the TRAFAC class translation factor GTPase superfamily. Classic translation factor GTPase family. IF-2 subfamily.

The protein localises to the cytoplasm. One of the essential components for the initiation of protein synthesis. Protects formylmethionyl-tRNA from spontaneous hydrolysis and promotes its binding to the 30S ribosomal subunits. Also involved in the hydrolysis of GTP during the formation of the 70S ribosomal complex. This Mycoplasma capricolum subsp. capricolum (strain California kid / ATCC 27343 / NCTC 10154) protein is Translation initiation factor IF-2.